The following is a 504-amino-acid chain: Transcription factor NDT80 (504 aa).

3 disordered regions span residues 64 to 172 (MHFN…QHHM), 283 to 310 (NGFP…NQHA), and 477 to 504 (RGRS…TPPQ). Composition is skewed to low complexity over residues 73 to 87 (QQQQ…QQQQ), 103 to 145 (QGPT…ARQP), 153 to 172 (QQAQ…QHHM), and 292 to 301 (HPQNQPQNHP). Residues 160–488 (QADAQSQAQQ…RSPSSYHKDR (329 aa)) constitute a DNA-binding region (NDT80).

It localises to the nucleus. Functionally, meiosis-specific transcription factor that binds to the middle sporulation element (MSE) of targeted genes corresponding to the consensus sequence 5'-ACACAAA-3'. Acts as an activator of CDR1 induction by antifungal drugs. Modulates azole sensitivity by controlling the expression of ergosterol biosynthesis genes. Required for hyphal growth in response to different filament-inducing cues and for the proper expression of genes characterizing the filamentous transcriptional program including noteworthy genes encoding cell wall components, such as HWP1, ECE1, RBT4, and ALS3. Is essential for the completion of cell separation through the direct transcriptional regulation of genes encoding the chitinase CHT3 and the cell wall glucosidase SUN41. Required for biofilm formation and plays a key role in microcolony formation under both flow and static conditions and to epithelial surfaces. Essential for virulence. The sequence is that of Transcription factor NDT80 from Candida albicans (strain SC5314 / ATCC MYA-2876) (Yeast).